The following is a 69-amino-acid chain: MRAIISLLLISAMVFSMIEAVPVEEGLQLFEGERGGCLPRNKFCNPSSGPRCCSGLTCKELNIWANKCL.

The signal sequence occupies residues 1–20 (MRAIISLLLISAMVFSMIEA). Residues 21–34 (VPVEEGLQLFEGER) constitute a propeptide that is removed on maturation. Intrachain disulfides connect Cys-37–Cys-53, Cys-44–Cys-58, and Cys-52–Cys-68.

This sequence belongs to the neurotoxin 01 (U2-agtx) family. As to expression, expressed by the venom gland.

It localises to the secreted. Its function is as follows. Insect active toxin causing rapid but reversible paralysis in crickets. No activity shown in mammals. Does not show effect on mammalian voltage-gated calcium channels. This chain is U2-agatoxin-Ao1z, found in Agelena orientalis (Funnel-web spider).